Reading from the N-terminus, the 442-residue chain is Tubulin beta chain (442 aa).

GTP-binding residues include Gln11, Glu69, Ser138, Gly142, Thr143, Gly144, Asn204, and Asn226. Residue Glu69 coordinates Mg(2+).

This sequence belongs to the tubulin family. Dimer of alpha and beta chains. A typical microtubule is a hollow water-filled tube with an outer diameter of 25 nm and an inner diameter of 15 nM. Alpha-beta heterodimers associate head-to-tail to form protofilaments running lengthwise along the microtubule wall with the beta-tubulin subunit facing the microtubule plus end conferring a structural polarity. Microtubules usually have 13 protofilaments but different protofilament numbers can be found in some organisms and specialized cells. Mg(2+) is required as a cofactor.

Its subcellular location is the cytoplasm. The protein resides in the cytoskeleton. In terms of biological role, tubulin is the major constituent of microtubules, a cylinder consisting of laterally associated linear protofilaments composed of alpha- and beta-tubulin heterodimers. Microtubules grow by the addition of GTP-tubulin dimers to the microtubule end, where a stabilizing cap forms. Below the cap, tubulin dimers are in GDP-bound state, owing to GTPase activity of alpha-tubulin. This chain is Tubulin beta chain (bPT2), found in Paramecium tetraurelia.